Consider the following 105-residue polypeptide: ATP-dependent Clp protease adapter protein ClpS (105 aa).

The protein belongs to the ClpS family. Binds to the N-terminal domain of the chaperone ClpA.

Its function is as follows. Involved in the modulation of the specificity of the ClpAP-mediated ATP-dependent protein degradation. The chain is ATP-dependent Clp protease adapter protein ClpS from Streptomyces avermitilis (strain ATCC 31267 / DSM 46492 / JCM 5070 / NBRC 14893 / NCIMB 12804 / NRRL 8165 / MA-4680).